The chain runs to 245 residues: MEVEESKNDASVVASPAPTKLPQKRFYRQRAHSNPIADHSFDYPIHPDDYDWSQHYPTIGDKRVEFADIGCGYGGFLVTLGEMFPDKFAVGMEIRVKVSDYVMDRIQALRKLNEGQYENIACIRTNAMKYLTNFFHKGQLEKMFFLYPDPHFKKAKHKWRIINSALLSEYSYVLRQGGLIYTITDVKDLHEWMCKHIEQHPAFERLTDDEVKADVLSEKLLDSSEEGKKVTRNKGDKFVAIFRKI.

S-adenosyl-L-methionine is bound by residues Gly-70, 93–94, 126–127, and Leu-146; these read EI and NA. The active site involves Asp-149. S-adenosyl-L-methionine is bound at residue 224-226; sequence SEE.

The protein belongs to the class I-like SAM-binding methyltransferase superfamily. TrmB family.

It localises to the nucleus. It catalyses the reaction guanosine(46) in tRNA + S-adenosyl-L-methionine = N(7)-methylguanosine(46) in tRNA + S-adenosyl-L-homocysteine. Its pathway is tRNA modification; N(7)-methylguanine-tRNA biosynthesis. In terms of biological role, catalyzes the formation of N(7)-methylguanine at position 46 (m7G46) in tRNA. In Aedes aegypti (Yellowfever mosquito), this protein is tRNA (guanine-N(7)-)-methyltransferase.